An 87-amino-acid polypeptide reads, in one-letter code: U3-theraphotoxin-Hhn1a 13 (87 aa).

The signal sequence occupies residues 1–24 (MVNMKASMFLTSAGLVPLFVVCYA). Positions 25 to 52 (SESEEKEFPKEMLSSIFAVDNDFKQEER) are excised as a propeptide. Intrachain disulfides connect cysteine 54-cysteine 67, cysteine 61-cysteine 72, and cysteine 66-cysteine 79.

The protein belongs to the neurotoxin 10 (Hwtx-1) family. 51 (Hntx-8) subfamily. Hntx-8 sub-subfamily. Expressed by the venom gland.

Its subcellular location is the secreted. Functionally, ion channel inhibitor. This is U3-theraphotoxin-Hhn1a 13 from Cyriopagopus hainanus (Chinese bird spider).